The primary structure comprises 278 residues: Neuronal membrane glycoprotein M6-a (278 aa).

Met1 carries the N-acetylmethionine modification. The Cytoplasmic portion of the chain corresponds to 1–22 (MEENMEEGQTQKGCFECCIKCL). Residues 23–43 (GGIPYASLIATILLYAGVALF) form a helical membrane-spanning segment. The Extracellular segment spans residues 44–84 (CGCGHEALSGTVNILQTYFEMARTAGDTLDVFTMIDIFKYV). The helical transmembrane segment at 85–105 (IYGIAAAFFVYGILLMVEGFF) threads the bilayer. Over 106 to 127 (TTGAIKDLYGDFKITTCGRCVS) the chain is Cytoplasmic. The chain crosses the membrane as a helical span at residues 128 to 148 (AWFIMLTYLFMLAWLGVTAFT). Residues 149 to 213 (SLPVYMYFNV…STELNMTFHL (65 aa)) are Extracellular-facing. Asn164 is a glycosylation site (N-linked (GlcNAc...) asparagine). The cysteines at positions 174 and 192 are disulfide-linked. The N-linked (GlcNAc...) asparagine glycan is linked to Asn208. A helical transmembrane segment spans residues 214–234 (FIVALAGAGAAVIAMVHYLMV). The Cytoplasmic portion of the chain corresponds to 235 to 278 (LSANWAYVKDACRMQKYEDIKSKEEQELHDIHSTRSKERLNAYT). The residue at position 256 (Ser256) is a Phosphoserine. Phosphothreonine is present on Thr278.

The protein belongs to the myelin proteolipid protein family. Interacts with OPRM1. Interacts with palmitoyltransferase ZDHHC17/HIP14; the interaction leads to palmitoylation of GPM6A. In terms of processing, N-glycosylated. Palmitoylated by ZDHHC17/HIP14. As to expression, expressed in hippocampus (at protein level). Isoform 1 is the predominant isoform expressed in brain, specifically in hippocampus. Isoform 2 is expressed at low levels in brain and kidney.

It localises to the cell membrane. The protein resides in the cell projection. The protein localises to the axon. It is found in the growth cone. Its subcellular location is the dendritic spine. It localises to the filopodium. The protein resides in the neuron projection. Its function is as follows. Involved in neuronal differentiation, including differentiation and migration of neuronal stem cells. Plays a role in neuronal plasticity and is involved in neurite and filopodia outgrowth, filopodia motility and probably synapse formation. Gpm6a-induced filopodia formation involves mitogen-activated protein kinase (MAPK) and Src signaling pathways. May be involved in neuronal NGF-dependent Ca(2+) influx. May be involved in regulation of endocytosis and intracellular trafficking of G-protein-coupled receptors (GPCRs); enhances internalization and recycling of mu-type opioid receptor. The protein is Neuronal membrane glycoprotein M6-a (Gpm6a) of Rattus norvegicus (Rat).